The following is a 92-amino-acid chain: UPF0250 protein VV0902 (92 aa).

The protein belongs to the UPF0250 family.

The polypeptide is UPF0250 protein VV0902 (Vibrio vulnificus (strain YJ016)).